Here is a 283-residue protein sequence, read N- to C-terminus: Thymidylate synthase (283 aa).

Arg-22 lines the dUMP pocket. Cys-160 acts as the Nucleophile in catalysis. DUMP is bound by residues 180–183 (RSCD), Asn-191, and 221–223 (HIY). Asp-183 provides a ligand contact to (6R)-5,10-methylene-5,6,7,8-tetrahydrofolate. A (6R)-5,10-methylene-5,6,7,8-tetrahydrofolate-binding site is contributed by Ser-282.

This sequence belongs to the thymidylate synthase family. Bacterial-type ThyA subfamily. As to quaternary structure, homodimer.

It localises to the cytoplasm. It catalyses the reaction dUMP + (6R)-5,10-methylene-5,6,7,8-tetrahydrofolate = 7,8-dihydrofolate + dTMP. The protein operates within pyrimidine metabolism; dTTP biosynthesis. Catalyzes the reductive methylation of 2'-deoxyuridine-5'-monophosphate (dUMP) to 2'-deoxythymidine-5'-monophosphate (dTMP) while utilizing 5,10-methylenetetrahydrofolate (mTHF) as the methyl donor and reductant in the reaction, yielding dihydrofolate (DHF) as a by-product. This enzymatic reaction provides an intracellular de novo source of dTMP, an essential precursor for DNA biosynthesis. This chain is Thymidylate synthase, found in Vibrio cholerae serotype O1 (strain ATCC 39315 / El Tor Inaba N16961).